Consider the following 280-residue polypeptide: Nucleotide-binding protein Swoo_4243 (280 aa).

An ATP-binding site is contributed by 8-15 (GRSGSGKS). GTP is bound at residue 56–59 (DVRN).

Belongs to the RapZ-like family.

Its function is as follows. Displays ATPase and GTPase activities. This Shewanella woodyi (strain ATCC 51908 / MS32) protein is Nucleotide-binding protein Swoo_4243.